Reading from the N-terminus, the 775-residue chain is E3 ubiquitin-protein ligase UHRF1 (775 aa).

Residues 1–77 enclose the Ubiquitin-like domain; sequence MWIQVRTMDG…IVQLLVRQIP (77 aa). Residues 81–128 are disordered; it reads PTKDKECGISDADSGCGSGQGESDKNSSCGEGATDVDGQPAGINSENV. Tudor-like stretches follow at residues 131-207 and 214-283; these read SLYK…LRAR and DLKV…IEEP. Residues 293 to 301 form a linker region; it reads PQKRQNGPE. A PHD-type zinc finger spans residues 299–366; the sequence is GPECKHCKDN…DWYCPDCRND (68 aa). 2 histone H3R2me0 binding regions span residues 333-337 and 353-355; these read CDECD and PQD. Positions 419 to 582 constitute a YDG domain; that stretch reads GPIPGVPVGT…FLVWRYLLRR (164 aa). A required to promote base flipping region spans residues 445-446; it reads HV. Residues 463-464 and Asp469 each bind DNA; that span reads AG. Required for formation of a 5-methylcytosine-binding pocket regions lie at residues 466–469 and 478–481; these read YEDD and YTGS. Over residues 616-628 the composition is skewed to basic and acidic residues; the sequence is ASKEREKENKTED. Residues 616 to 655 form a disordered region; sequence ASKEREKENKTEDELSESPSKGKRKRNSAGSGLSDAKSTP. The RING-type zinc-finger motif lies at 706 to 745; the sequence is CICCQEVVYEPITTECHHNICKGCLDRSFKALVHNCPACR.

Its subcellular location is the nucleus. It carries out the reaction S-ubiquitinyl-[E2 ubiquitin-conjugating enzyme]-L-cysteine + [acceptor protein]-L-lysine = [E2 ubiquitin-conjugating enzyme]-L-cysteine + N(6)-ubiquitinyl-[acceptor protein]-L-lysine.. It functions in the pathway protein modification; protein ubiquitination. Its function is as follows. Multidomain protein that acts as a key epigenetic regulator by bridging DNA methylation and chromatin modification. Specifically recognizes and binds hemimethylated DNA at replication forks via its YDG domain and recruits dnmt1 methyltransferase to ensure faithful propagation of the DNA methylation patterns through DNA replication. In addition to its role in maintenance of DNA methylation, also plays a key role in chromatin modification: through its tudor-like regions and PHD-type zinc fingers, specifically recognizes and binds histone H3 trimethylated at 'Lys-9' (H3K9me3) and unmethylated at 'Arg-2' (H3R2me0), respectively, and recruits chromatin proteins. Enriched in pericentric heterochromatin where it recruits different chromatin modifiers required for this chromatin replication. Also localizes to euchromatic regions where it negatively regulates transcription possibly by impacting DNA methylation and histone modifications. Has E3 ubiquitin-protein ligase activity by mediating the ubiquitination of target proteins. However, it is still unclear how E3 ubiquitin-protein ligase activity is related to its role in chromatin in vivo. The chain is E3 ubiquitin-protein ligase UHRF1 (uhrf1) from Xenopus tropicalis (Western clawed frog).